A 217-amino-acid chain; its full sequence is Uracil-DNA glycosylase (217 aa).

The active-site Proton acceptor is aspartate 62.

It belongs to the uracil-DNA glycosylase (UDG) superfamily. UNG family.

It is found in the cytoplasm. The catalysed reaction is Hydrolyzes single-stranded DNA or mismatched double-stranded DNA and polynucleotides, releasing free uracil.. Functionally, excises uracil residues from the DNA which can arise as a result of misincorporation of dUMP residues by DNA polymerase or due to deamination of cytosine. The polypeptide is Uracil-DNA glycosylase (Streptococcus equi subsp. zooepidemicus (strain H70)).